Here is a 21-residue protein sequence, read N- to C-terminus: Tricyclic peptide MS-271 (21 aa).

A cross-link (3-cysteinyl-aspartic acid (Cys-Asp)) is located at residues 1–9 (CLGVGSCND). 2 disulfide bridges follow: Cys1/Cys13 and Cys7/Cys19. The residue at position 21 (Trp21) is a D-tryptophan.

In terms of biological role, inhibits chicken myosin light chain kinase with an IC(50) of 8 M. Does not inhibit bovine cAMP-dependent protein kinase or rat protein kinase C. Antibacterial activity against the Gram-positive bacteria B.subtilis, E.faecium and S.aureus. No antibacterial activity against the Gram-negative bacteria E.coli, K.pneumoniae, P.aeruginosa, P.vulgaris, S.sonnei and S.typhosa. No antifungal activity against C.albicans. In Streptomyces sp, this protein is Tricyclic peptide MS-271.